The chain runs to 245 residues: DNA polymerase sliding clamp (245 aa).

It belongs to the PCNA family. Homotrimer. The subunits circularize to form a toroid; DNA passes through its center. Replication factor C (RFC) is required to load the toroid on the DNA.

Its function is as follows. Sliding clamp subunit that acts as a moving platform for DNA processing. Responsible for tethering the catalytic subunit of DNA polymerase and other proteins to DNA during high-speed replication. This Methanococcoides burtonii (strain DSM 6242 / NBRC 107633 / OCM 468 / ACE-M) protein is DNA polymerase sliding clamp.